The sequence spans 151 residues: NADPH-dependent 7-cyano-7-deazaguanine reductase (151 aa).

Cys51 serves as the catalytic Thioimide intermediate. Asp58 (proton donor) is an active-site residue. Substrate contacts are provided by residues 73 to 75 and 92 to 93; these read VES and HE.

The protein belongs to the GTP cyclohydrolase I family. QueF type 1 subfamily.

The protein resides in the cytoplasm. It catalyses the reaction 7-aminomethyl-7-carbaguanine + 2 NADP(+) = 7-cyano-7-deazaguanine + 2 NADPH + 3 H(+). The protein operates within tRNA modification; tRNA-queuosine biosynthesis. Functionally, catalyzes the NADPH-dependent reduction of 7-cyano-7-deazaguanine (preQ0) to 7-aminomethyl-7-deazaguanine (preQ1). This chain is NADPH-dependent 7-cyano-7-deazaguanine reductase, found in Bacteroides thetaiotaomicron (strain ATCC 29148 / DSM 2079 / JCM 5827 / CCUG 10774 / NCTC 10582 / VPI-5482 / E50).